A 419-amino-acid chain; its full sequence is Carboxypeptidase A1 (419 aa).

Residues 1–16 form the signal peptide; it reads MRGLLVLSVLLGAVFG. Residues 17 to 110 constitute a propeptide, activation peptide; the sequence is KEDFVGHQVL…QEQMFAFRSR (94 aa). One can recognise a Peptidase M14 domain in the interval 121–414; sequence TYHTLEEIYD…LALLTIMEHT (294 aa). 2 residues coordinate Zn(2+): His-179 and Glu-182. Substrate-binding positions include 179–182, Arg-237, and 254–255; these read HSRE and NR. Residues Cys-248 and Cys-271 are joined by a disulfide bond. Position 306 (His-306) interacts with Zn(2+). Substrate contacts are provided by residues 307–308 and Tyr-358; that span reads SY. Glu-380 functions as the Proton donor/acceptor in the catalytic mechanism.

The protein belongs to the peptidase M14 family. In terms of assembly, monomer. May form a complex with proelastase 2. Requires Zn(2+) as cofactor.

The protein resides in the secreted. The catalysed reaction is Release of a C-terminal amino acid, but little or no action with -Asp, -Glu, -Arg, -Lys or -Pro.. It carries out the reaction leukotriene C4 + H2O = leukotriene F4 + glycine. Inhibited by interaction with the S.magnifica carboxypeptidase inhibitor SmCI. Functionally, carboxypeptidase that catalyzes the release of a C-terminal amino acid, but has little or no action with -Asp, -Glu, -Arg, -Lys or -Pro. Catalyzes the conversion of leukotriene C4 to leukotriene F4 via the hydrolysis of an amide bond. In Homo sapiens (Human), this protein is Carboxypeptidase A1.